The primary structure comprises 550 residues: NAD(P)H-quinone oxidoreductase chain 4 3 (550 aa).

The next 14 membrane-spanning stretches (helical) occupy residues 5-25, 36-56, 86-106, 114-134, 135-155, 168-188, 212-232, 243-263, 277-297, 311-331, 332-352, 375-395, 418-438, and 489-509; these read FPWL…IPLL, YALI…WQHF, ISAP…FSAW, LFYA…VAKD, LFLF…LVCI, FLLY…ALSL, MWLY…FPLH, SSPV…YGLM, FAPL…FSSF, VSHM…GING, AMLQ…LAGV, VFAM…MSGF, ITVF…LSML, and IFIA…PKLL.

The protein belongs to the complex I subunit 4 family.

Its subcellular location is the cellular thylakoid membrane. It catalyses the reaction a plastoquinone + NADH + (n+1) H(+)(in) = a plastoquinol + NAD(+) + n H(+)(out). The catalysed reaction is a plastoquinone + NADPH + (n+1) H(+)(in) = a plastoquinol + NADP(+) + n H(+)(out). NDH-1 shuttles electrons from NAD(P)H, via FMN and iron-sulfur (Fe-S) centers, to quinones in the respiratory chain. The immediate electron acceptor for the enzyme in this species is believed to be plastoquinone. Couples the redox reaction to proton translocation (for every two electrons transferred, four hydrogen ions are translocated across the cytoplasmic membrane), and thus conserves the redox energy in a proton gradient. This Picosynechococcus sp. (strain ATCC 27264 / PCC 7002 / PR-6) (Agmenellum quadruplicatum) protein is NAD(P)H-quinone oxidoreductase chain 4 3.